The primary structure comprises 222 residues: Glutathione S-transferase (222 aa).

Positions 3-83 constitute a GST N-terminal domain; sequence GKPKLHYTRG…YIAGKYNLYG (81 aa). Residues tyrosine 9, arginine 45, 54-55, and 67-68 each bind glutathione; these read QV and QS. One can recognise a GST C-terminal domain in the interval 85–208; sequence DLKERAWIDM…QPGSQRKPPL (124 aa).

The protein belongs to the GST superfamily. Alpha family. In terms of assembly, homodimer.

It is found in the cytoplasm. It catalyses the reaction RX + glutathione = an S-substituted glutathione + a halide anion + H(+). In terms of biological role, conjugation of reduced glutathione to a wide number of exogenous and endogenous hydrophobic electrophiles. This Gallus gallus (Chicken) protein is Glutathione S-transferase.